Consider the following 820-residue polypeptide: MKLPYSWLKELIPDLPPVADLEPTFAHLGLPLEGVEDVPAPVGGVLLVAVKAAEPMEGTQLTKLTLDTGENGEKTIASGAPNAVGLPAGTMVALVTPGTTLGGITYGVRPMQGVESWGMAASAKELGIGESNAGILTFPAGTAAPGTPLRELWPADSVLDVEVTPNRADVLSALGLARDLAAYLNLELKEPQIPAAPTQPGEIRVSLPDRGRVLDRDPQGKLRFGCDHFAARAVSGLQNGPAPLWMQRRVSLAGMRSIDLIVDTSNYVMLELGQPTALYDRRDVAGDGLVVAFGLREGETVKDLLGNTHQVGPEDLLILDAGMSDEPVMTVAEAFASAGQPKEGSHVLGIAGIMGGDHGHVRADTRDVVIESAHFDPVLLRRTSTRLGLKTDAVYRYERGVDPLLAPKAAVRVAELLRAAGGTPEAGQTVVGTPEVPQTITTTGEQIRALLGMHIGTAEMRESLTRLGCTVTGDGDSLTVTPPSWRVDMVIWQDLAEEVARLHGFTELPETLPTLRVHESNIGASAQSEARAELRRTLAGLGFQEVVTYTFTSDEEAQKARAEAPGVRLRNPMTTDRTGMRTALYPSLLRAAGAHPKGERALLFEIGRIFPAAGEQERLGLLMRGDLAARTYQDGVRGDFSVFKGLVQGFAGAVGASFALEQLRGDDVPAALHPGVAGAVVWNGERVGWLGALHPEIAQEFGLKGDTFLMEAALPLPGRDWAFRDPSRAPAAWRDLAVIAPQGVSYGDIVGVLKGAGGELLESVEPFDVFTGEQVGAGNRSVAVRLTYRGAKTLTDEEVDPVFNAQIDAVKARGWAIREK.

A tRNA-binding domain is found at P39–R150. A B5 domain is found at E435–E510. Residues D488, D494, E497, and E498 each coordinate Mg(2+). An FDX-ACB domain is found at S727–R818.

It belongs to the phenylalanyl-tRNA synthetase beta subunit family. Type 1 subfamily. Tetramer of two alpha and two beta subunits. Mg(2+) serves as cofactor.

It localises to the cytoplasm. The catalysed reaction is tRNA(Phe) + L-phenylalanine + ATP = L-phenylalanyl-tRNA(Phe) + AMP + diphosphate + H(+). In Deinococcus radiodurans (strain ATCC 13939 / DSM 20539 / JCM 16871 / CCUG 27074 / LMG 4051 / NBRC 15346 / NCIMB 9279 / VKM B-1422 / R1), this protein is Phenylalanine--tRNA ligase beta subunit (pheT).